The primary structure comprises 285 residues: Small ribosomal subunit biogenesis GTPase RsgA (285 aa).

The CP-type G domain maps to 56–217 (DNLLIRPIVA…IIDTPGFSSI (162 aa)). GTP contacts are provided by residues 105–108 (NKID) and 159–167 (GPSGVGKSS). Zn(2+) is bound by residues Cys241, Cys246, His248, and Cys254.

It belongs to the TRAFAC class YlqF/YawG GTPase family. RsgA subfamily. As to quaternary structure, monomer. Associates with 30S ribosomal subunit, binds 16S rRNA. Zn(2+) is required as a cofactor.

It is found in the cytoplasm. One of several proteins that assist in the late maturation steps of the functional core of the 30S ribosomal subunit. Helps release RbfA from mature subunits. May play a role in the assembly of ribosomal proteins into the subunit. Circularly permuted GTPase that catalyzes slow GTP hydrolysis, GTPase activity is stimulated by the 30S ribosomal subunit. The polypeptide is Small ribosomal subunit biogenesis GTPase RsgA (Fusobacterium nucleatum subsp. nucleatum (strain ATCC 25586 / DSM 15643 / BCRC 10681 / CIP 101130 / JCM 8532 / KCTC 2640 / LMG 13131 / VPI 4355)).